The following is a 293-amino-acid chain: Small ribosomal subunit biogenesis GTPase RsgA (293 aa).

Positions 63-223 (QNELVRPPVA…VADTPGFSAL (161 aa)) constitute a CP-type G domain. Residues 112–115 (SKID) and 166–174 (GQSGVGKSS) contribute to the GTP site. 4 residues coordinate Zn(2+): Cys247, Cys252, His254, and Cys260.

This sequence belongs to the TRAFAC class YlqF/YawG GTPase family. RsgA subfamily. Monomer. Associates with 30S ribosomal subunit, binds 16S rRNA. Zn(2+) serves as cofactor.

The protein resides in the cytoplasm. Functionally, one of several proteins that assist in the late maturation steps of the functional core of the 30S ribosomal subunit. Helps release RbfA from mature subunits. May play a role in the assembly of ribosomal proteins into the subunit. Circularly permuted GTPase that catalyzes slow GTP hydrolysis, GTPase activity is stimulated by the 30S ribosomal subunit. The protein is Small ribosomal subunit biogenesis GTPase RsgA of Geobacillus thermodenitrificans (strain NG80-2).